Here is a 512-residue protein sequence, read N- to C-terminus: V-type proton ATPase subunit B (512 aa).

Arg-381 provides a ligand contact to ATP. The tract at residues 484–512 is disordered; it reads LYGRDREQDDDEDEDEEDPDKSGDKLIDA. A compositionally biased stretch (acidic residues) spans 491 to 502; it reads QDDDEDEDEEDP. Over residues 503-512 the composition is skewed to basic and acidic residues; that stretch reads DKSGDKLIDA.

The protein belongs to the ATPase alpha/beta chains family. In terms of assembly, V-ATPase is a heteromultimeric enzyme composed of a peripheral catalytic V1 complex (components A to H) attached to an integral membrane V0 proton pore complex (components: a, c, c', c'', d, e, f and VOA1).

The protein localises to the vacuole membrane. Functionally, non-catalytic subunit of the V1 complex of vacuolar(H+)-ATPase (V-ATPase), a multisubunit enzyme composed of a peripheral complex (V1) that hydrolyzes ATP and a membrane integral complex (V0) that translocates protons. Plays an important role in resistance to several stresses, as well as in autophagy and virulence. This Candida albicans (strain SC5314 / ATCC MYA-2876) (Yeast) protein is V-type proton ATPase subunit B.